Consider the following 629-residue polypeptide: Polygalacturonase non-catalytic subunit AroGP2 (629 aa).

A signal peptide spans 1–27 (MHNKILVSSYILLVLLFSLSSFNIVVA). Residues 28 to 109 (KDGDESGNPF…MCAPDLLPSL (82 aa)) constitute a propeptide that is removed on maturation. N-linked (GlcNAc...) asparagine glycans are attached at residues N125, N143, N255, N277, N333, N368, and N386. The segment covering 267-293 (YGQNANGENQNFTSYSTNGNNPQNNFK) has biased composition (polar residues). A disordered region spans residues 267 to 305 (YGQNANGENQNFTSYSTNGNNPQNNFKNYGVGGNGPSET). Residues 414-628 (FFREKMLKSG…FENDMTWATA (215 aa)) form the BURP domain.

As to quaternary structure, interacts with polygalacturonase to form heterodimers.

Its subcellular location is the secreted. It is found in the extracellular space. The protein resides in the apoplast. It localises to the cell wall. Its function is as follows. Non-catalytic subunit of polygalacturonase. This is Polygalacturonase non-catalytic subunit AroGP2 (GP2) from Solanum lycopersicum (Tomato).